The sequence spans 228 residues: Cytidylate kinase (228 aa).

ATP is bound at residue 10-18 (GPSGSGKGT).

It belongs to the cytidylate kinase family. Type 1 subfamily.

The protein resides in the cytoplasm. The enzyme catalyses CMP + ATP = CDP + ADP. The catalysed reaction is dCMP + ATP = dCDP + ADP. This Acinetobacter baumannii (strain SDF) protein is Cytidylate kinase.